Here is a 286-residue protein sequence, read N- to C-terminus: ATP synthase gamma chain (286 aa).

This sequence belongs to the ATPase gamma chain family. As to quaternary structure, F-type ATPases have 2 components, CF(1) - the catalytic core - and CF(0) - the membrane proton channel. CF(1) has five subunits: alpha(3), beta(3), gamma(1), delta(1), epsilon(1). CF(0) has three main subunits: a, b and c.

The protein localises to the cell inner membrane. Its function is as follows. Produces ATP from ADP in the presence of a proton gradient across the membrane. The gamma chain is believed to be important in regulating ATPase activity and the flow of protons through the CF(0) complex. The protein is ATP synthase gamma chain of Pseudomonas savastanoi pv. phaseolicola (strain 1448A / Race 6) (Pseudomonas syringae pv. phaseolicola (strain 1448A / Race 6)).